Reading from the N-terminus, the 159-residue chain is Ribosomal RNA large subunit methyltransferase H (159 aa).

S-adenosyl-L-methionine-binding positions include L76, G108, and 127 to 132 (FGLLTL).

It belongs to the RNA methyltransferase RlmH family. As to quaternary structure, homodimer.

Its subcellular location is the cytoplasm. It catalyses the reaction pseudouridine(1915) in 23S rRNA + S-adenosyl-L-methionine = N(3)-methylpseudouridine(1915) in 23S rRNA + S-adenosyl-L-homocysteine + H(+). In terms of biological role, specifically methylates the pseudouridine at position 1915 (m3Psi1915) in 23S rRNA. The protein is Ribosomal RNA large subunit methyltransferase H of Streptococcus pyogenes serotype M12 (strain MGAS2096).